Reading from the N-terminus, the 382-residue chain is MSEQPTEPLSIKEEYQLWRKNCRYMYEFVSETALMWPSLTIQWLPNYTTTNGLIDAKLLLGTHTSNQSANQLKVASTQLSADPNVKANSKIKTVQKLENNAEICRARYMPQDANIVATINGLGEVDLYNLDTETRYSHFAPHTKNGYGLSWNPKQKGLLVTGADDNFVCVTDTTTNKTTFKSDIQKDIVNDVKWHQFNGNLFASVSEDSHVYLFDARDNKVVSQYYAESSNGINSLAFSPFAENLVAIGNTSSNINLLDLRKLGENSGLLHTMMGHSEGITCMEFSPHHDGILATGSQDRRIIIWDLFKVGEEQQQEDAEDGCPELFMMHAGHTAGVSDLSWCPFKDWMIGSVADDNIVHLWEISKKLITNEEAEVDVSILE.

WD repeat units follow at residues 98-138, 141-181, 184-224, 228-268, and 275-315; these read ENNA…RYSH, PHTK…TTFK, IQKD…VVSQ, ESSN…ENSG, and GHSE…EEQQ. An interaction with the histone H4 N-terminus region spans residues 317–321; the sequence is EDAED. One copy of the WD 6 repeat lies at 332–372; sequence GHTAGVSDLSWCPFKDWMIGSVADDNIVHLWEISKKLITNE.

Belongs to the WD repeat RBAP46/RBAP48/MSI1 family. Component of the HAT-B complex composed of at least HAT1 and HAT2. The HAT-B complex binds to histone H4 tail.

It is found in the cytoplasm. The protein resides in the nucleus. Its function is as follows. Regulatory subunit of the histone acetylase B (HAT-B) complex. The complex acetylates 'Lys-14' of histone H4 which is required for telomeric silencing. This chain is Histone acetyltransferase type B subunit 2 (HAT2), found in Candida albicans (strain SC5314 / ATCC MYA-2876) (Yeast).